Reading from the N-terminus, the 485-residue chain is Otoconin-90 (485 aa).

The N-terminal stretch at 1-17 (MIMLLMVGMLMAPCVGA) is a signal peptide. Asparagine 37 carries N-linked (GlcNAc...) asparagine glycosylation. A phospholipase A2-like 1 region spans residues 75-189 (LLQFVNSMRC…SLNFLDASFC (115 aa)). Intrachain disulfides connect cysteine 84/cysteine 144, cysteine 98/cysteine 189, cysteine 100/cysteine 116, cysteine 115/cysteine 171, cysteine 122/cysteine 164, cysteine 131/cysteine 157, and cysteine 151/cysteine 162. N-linked (GlcNAc...) asparagine glycans are attached at residues asparagine 178 and asparagine 288. 2 phospholipase A2-like regions span residues 315–371 (MLQL…QVGC) and 383–435 (CEDH…PVSC). Asparagine 417 is a glycosylation site (N-linked (GlcNAc...) asparagine). Residues 444–485 (LASSVDSSSEENSEEAPPQMERLRRFLEKPPGPLGARPLGGK) are disordered.

Belongs to the phospholipase A2 family. Interacts with OTOL1. As to expression, in the embryo, highly expressed in the developing otocyst with weak expression in the brain. Also expressed in nonsensory epithelia of both the vestibular and cochlear portions of the developing inner ear. Not expressed in adult or embryonic macular sensory epithelia.

It is found in the secreted. Its function is as follows. Major protein of the otoconia, a calcium carbonate structure in the saccule and utricle of the ear. Together with OTOL1, acts as a scaffold for otoconia biomineralization: sequesters calcium and forms interconnecting fibrils between otoconia that are incorporated into the calcium crystal structure. Together with OTOL1, modulates calcite crystal morphology and growth kinetics. It is unlikely that this protein has phospholipase A2 activity. The sequence is that of Otoconin-90 from Mus musculus (Mouse).